We begin with the raw amino-acid sequence, 437 residues long: Enolase 2 (437 aa).

2 residues coordinate substrate: His-160 and Glu-169. Residue Glu-212 is the Proton donor of the active site. Positions 247, 296, and 321 each coordinate Mg(2+). Substrate is bound by residues Glu-296 and Asp-321. Lys-346 functions as the Proton acceptor in the catalytic mechanism. Residues Ser-373–Ser-376 and Lys-397 each bind substrate.

The protein belongs to the enolase family. Homodimer. Requires Mg(2+) as cofactor.

It localises to the cytoplasm. It carries out the reaction (2R)-2-phosphoglycerate = phosphoenolpyruvate + H2O. It functions in the pathway carbohydrate degradation; glycolysis; pyruvate from D-glyceraldehyde 3-phosphate: step 4/5. This is Enolase 2 (ENO2) from Candida glabrata (strain ATCC 2001 / BCRC 20586 / JCM 3761 / NBRC 0622 / NRRL Y-65 / CBS 138) (Yeast).